We begin with the raw amino-acid sequence, 307 residues long: Transcription factor MYB78 (307 aa).

2 HTH myb-type domains span residues 23–79 and 80–130; these read EMDV…RPDV and RRGN…QKHA. DNA-binding regions (H-T-H motif) lie at residues 51 to 75 and 103 to 126; these read WNSL…LNYL and WSKI…RTRV.

Its subcellular location is the nucleus. The sequence is that of Transcription factor MYB78 from Arabidopsis thaliana (Mouse-ear cress).